We begin with the raw amino-acid sequence, 427 residues long: Probable fatty acid methyltransferase Rv3720 (427 aa).

Residues 167-168 (YT), 202-210 (LLDVGCGWG), and 227-232 (TLSAEQ) each bind S-adenosyl-L-methionine.

This sequence belongs to the CFA/CMAS family.

Functionally, may be a S-adenosylmethionine-dependent methyltransferase involved in fatty acid metabolism. This chain is Probable fatty acid methyltransferase Rv3720, found in Mycobacterium tuberculosis (strain ATCC 25618 / H37Rv).